The primary structure comprises 324 residues: Arginase (324 aa).

Positions 115, 143, 145, and 147 each coordinate Mn(2+). Residues 145–149, 156–158, and aspartate 202 each bind substrate; these read HADIN and SGN. Residues aspartate 249 and aspartate 251 each contribute to the Mn(2+) site. Positions 263 and 294 each coordinate substrate.

The protein belongs to the arginase family. As to quaternary structure, homotrimer. Requires Mn(2+) as cofactor.

The catalysed reaction is L-arginine + H2O = urea + L-ornithine. It participates in nitrogen metabolism; urea cycle; L-ornithine and urea from L-arginine: step 1/1. The polypeptide is Arginase (agaA) (Emericella nidulans (strain FGSC A4 / ATCC 38163 / CBS 112.46 / NRRL 194 / M139) (Aspergillus nidulans)).